An 836-amino-acid chain; its full sequence is Periostin (836 aa).

An N-terminal signal peptide occupies residues 1–21 (MIPFLPMFSLLLLLIVNPINA). The 55-residue stretch at 40–94 (GPNVCALQQILGTKKKYFSTCKNWYKKSICGQKTTVLYECCPGYMRMEGMKGCPA) folds into the EMI domain. Disulfide bonds link Cys44-Cys80, Cys69-Cys333, Cys79-Cys92, Cys208-Cys311, and Cys467-Cys472. Cys60 is subject to S-cysteinyl cysteine. 4 FAS1 domains span residues 97–230 (PIDH…DRVL), 234–365 (GTSI…DQVL), 368–492 (DSAK…REII), and 496–628 (EKSL…DKLL). N-linked (GlcNAc...) asparagine glycosylation occurs at Asn599.

In terms of assembly, homodimer. Interacts with BMP1 and fibronectin. In terms of processing, gamma-carboxylation is controversial. Gamma-carboxyglutamated; gamma-carboxyglutamate residues are formed by vitamin K dependent carboxylation; this may be required for calcium binding. According to a more recent report, does not contain vitamin K-dependent gamma-carboxyglutamate residues. As to expression, widely expressed with highest levels in aorta, stomach, lower gastrointestinal tract, placenta, uterus, thyroid tissue and breast. Expressed in the kidney. Expressed in the lung. Up-regulated in epithelial ovarian tumors. Not expressed in normal ovaries. Also highly expressed at the tumor periphery of lung carcinoma tissue but not within the tumor. Overexpressed in breast cancers.

It localises to the golgi apparatus. Its subcellular location is the secreted. The protein resides in the extracellular space. The protein localises to the extracellular matrix. In terms of biological role, induces cell attachment and spreading and plays a role in cell adhesion. Enhances incorporation of BMP1 in the fibronectin matrix of connective tissues, and subsequent proteolytic activation of lysyl oxidase LOX. In Homo sapiens (Human), this protein is Periostin (POSTN).